A 1158-amino-acid polypeptide reads, in one-letter code: MTLHAYLGRAGTGKSTKMLTEIKQKMKADPLGDPIILIAPTQSTFQLEQAFVNDPELNGSLRTEVLHFERLSHRIFQEVGSYSEQKLSKAATEMMIYNIVQEQQKYLKLYQSQAKYYGFSEKLTEQIQDFKKYAVTPEHLEHFIADKNMQTRTKNKLEDIALIYREFEQRIQNEFITGEDSLQYFIDCMPKSEWLKRADIYIDGFHNFSTIEYLIIKGLIKYAKSVTIILTTDGNHDQFSLFRKPSEVLRHIEEIANELNISIERQYFNQLYRFNNQDLKHLEQEFDVLQINRVACQGHINILESATMREEINEIARRIIVDIRDKQLRYQDIAILYRDESYAYLFDSILPLYNIPYNIDTKRSMTHHPVMEMIRSLIEVIQSNWQVNPMLRLLKTDVLTASYLKSAYLVDLLENFVLERGIYGKRWLDDELFNVEHFSKMGRKAHKLTEDERNTFEQVVKLKKDVIDKILHFEKQMSQAETVKDFATAFYESMEYFELPNQLMTERDELDLNGNHEKAEEIDQIWNGLIQILDDLVLVFGDEPMSMERFLEVFDIGLEQLEFVMIPQTLDQVSIGTMDLAKVDNKQHVFLVGMNDGTMPQPVTASSLITDEEKKYFEQQANVELSPTSDILQMDEAFVCYIAMTRARQDVTFSYRLMGSSGDDKEISPFLNQIQSLFNQLEITNIPQYHEVNPLSLMQHAKQTKITLFEALRAWLYDEIVADSWLDAYQVIRDSDHLNQGLDYLMSALTFDNETVKLGETLSKDLYGKEINASVSRFEGYQQCPFKHYASHGLKLNERTKYELQNFDLGDIFHSVLKYISERINGDFKQLDLKKIRQLTNEALEEILPKVQFNLLNSSAYYRYLSRRIGAIVETTLSALKYQGTYSKFMPKHFETSFRRKPRTNDELIAQTLTTTQGIPINIRGQIDRIDTYTKNDTSFVNIIDYKSSEGSATLDLTKVYYGMQMQMMTYMDIVLQNKQRLGLTDIVKPGGLLYFHVHEPRIKFKSWSDIDEDKLEQDLIKKFKLSGLVNADQTVIDALDIRLEPKFTSDIVPVGLNKDGSLSKRGSQVADEATIYKFIQHNKENFIETASNIMDGHTEVAPLKYKQKLPCAFCSYQSVCHVDGMIDSKRYRTVDETINPIEAIQNININDEFGGEQ.

Positions 1 to 275 constitute a UvrD-like helicase ATP-binding domain; sequence MTLHAYLGRA…QYFNQLYRFN (275 aa). 8–15 is a binding site for ATP; the sequence is GRAGTGKS. In terms of domain architecture, UvrD-like helicase C-terminal spans 269–583; that stretch reads NQLYRFNNQD…SIGTMDLAKV (315 aa). 4 residues coordinate [4Fe-4S] cluster: Cys784, Cys1112, Cys1115, and Cys1121.

The protein belongs to the helicase family. AddB/RexB type 1 subfamily. As to quaternary structure, heterodimer of AddA and AddB. Mg(2+) is required as a cofactor. [4Fe-4S] cluster serves as cofactor.

In terms of biological role, the heterodimer acts as both an ATP-dependent DNA helicase and an ATP-dependent, dual-direction single-stranded exonuclease. Recognizes the chi site generating a DNA molecule suitable for the initiation of homologous recombination. The AddB subunit has 5' -&gt; 3' nuclease activity but not helicase activity. In Staphylococcus aureus (strain MSSA476), this protein is ATP-dependent helicase/deoxyribonuclease subunit B.